The primary structure comprises 185 residues: Ribosome-recycling factor (185 aa).

It belongs to the RRF family.

The protein resides in the cytoplasm. Responsible for the release of ribosomes from messenger RNA at the termination of protein biosynthesis. May increase the efficiency of translation by recycling ribosomes from one round of translation to another. In Marinomonas sp. (strain MWYL1), this protein is Ribosome-recycling factor.